A 185-amino-acid polypeptide reads, in one-letter code: Large ribosomal subunit protein uL5 (185 aa).

Belongs to the universal ribosomal protein uL5 family. Part of the 50S ribosomal subunit; part of the 5S rRNA/L5/L18/L25 subcomplex. Contacts the 5S rRNA and the P site tRNA. Forms a bridge to the 30S subunit in the 70S ribosome.

Functionally, this is one of the proteins that bind and probably mediate the attachment of the 5S RNA into the large ribosomal subunit, where it forms part of the central protuberance. In the 70S ribosome it contacts protein S13 of the 30S subunit (bridge B1b), connecting the 2 subunits; this bridge is implicated in subunit movement. Contacts the P site tRNA; the 5S rRNA and some of its associated proteins might help stabilize positioning of ribosome-bound tRNAs. This is Large ribosomal subunit protein uL5 from Nitrobacter hamburgensis (strain DSM 10229 / NCIMB 13809 / X14).